Consider the following 322-residue polypeptide: uncharacterized protein (322 aa).

Positions 1–17 (MASMAAAIAASRSAVMS) are enriched in low complexity. The disordered stretch occupies residues 1 to 22 (MASMAAAIAASRSAVMSGNRPL). Position 2 is an N-acetylalanine (Ala2). Ser37 carries the post-translational modification Phosphoserine. The disordered stretch occupies residues 81 to 104 (AAAADAGDVRDPARFPGLRGPTGQ). Ser130 bears the Phosphoserine mark. Polar residues-rich tracts occupy residues 142-153 (QEPSAATVTSDA) and 161-177 (QGTQ…SSSL). Residues 142-301 (QEPSAATVTS…DDDALFSEPA (160 aa)) form a disordered region. Position 176 is a phosphoserine (Ser176). The span at 183–203 (ARKEEEAPFWKINAERSREGP) shows a compositional bias: basic and acidic residues. Over residues 245–255 (QEQQTLPSVSA) the composition is skewed to polar residues.

It is found in the cytoplasm. This is an uncharacterized protein from Mus musculus (Mouse).